A 545-amino-acid chain; its full sequence is Chaperonin GroEL 3 (545 aa).

ATP contacts are provided by residues 29 to 32, 86 to 90, G413, 479 to 481, and D495; these read TLGP, DGTTT, and DAV. Residues 526-545 are disordered; it reads DKQAKAPAGVGPGPGEGFDY. Residues 535–545 show a composition bias toward gly residues; sequence VGPGPGEGFDY.

The protein belongs to the chaperonin (HSP60) family. In terms of assembly, forms a cylinder of 14 subunits composed of two heptameric rings stacked back-to-back. Interacts with the co-chaperonin GroES.

Its subcellular location is the cytoplasm. It carries out the reaction ATP + H2O + a folded polypeptide = ADP + phosphate + an unfolded polypeptide.. In terms of biological role, together with its co-chaperonin GroES, plays an essential role in assisting protein folding. The GroEL-GroES system forms a nano-cage that allows encapsulation of the non-native substrate proteins and provides a physical environment optimized to promote and accelerate protein folding. The chain is Chaperonin GroEL 3 from Trichormus variabilis (strain ATCC 29413 / PCC 7937) (Anabaena variabilis).